We begin with the raw amino-acid sequence, 190 residues long: 2-phospho-L-lactate guanylyltransferase (190 aa).

The protein belongs to the CofC family. In terms of assembly, homodimer.

The enzyme catalyses (2S)-2-phospholactate + GTP + H(+) = (2S)-lactyl-2-diphospho-5'-guanosine + diphosphate. It functions in the pathway cofactor biosynthesis; coenzyme F420 biosynthesis. Its function is as follows. Guanylyltransferase that catalyzes the activation of (2S)-2-phospholactate (2-PL) as (2S)-lactyl-2-diphospho-5'-guanosine, via the condensation of 2-PL with GTP. It is involved in the biosynthesis of coenzyme F420, a hydride carrier cofactor. In Methanopyrus kandleri (strain AV19 / DSM 6324 / JCM 9639 / NBRC 100938), this protein is 2-phospho-L-lactate guanylyltransferase.